Reading from the N-terminus, the 488-residue chain is Aspartyl/glutamyl-tRNA(Asn/Gln) amidotransferase subunit B (488 aa).

This sequence belongs to the GatB/GatE family. GatB subfamily. Heterotrimer of A, B and C subunits.

The enzyme catalyses L-glutamyl-tRNA(Gln) + L-glutamine + ATP + H2O = L-glutaminyl-tRNA(Gln) + L-glutamate + ADP + phosphate + H(+). It carries out the reaction L-aspartyl-tRNA(Asn) + L-glutamine + ATP + H2O = L-asparaginyl-tRNA(Asn) + L-glutamate + ADP + phosphate + 2 H(+). In terms of biological role, allows the formation of correctly charged Asn-tRNA(Asn) or Gln-tRNA(Gln) through the transamidation of misacylated Asp-tRNA(Asn) or Glu-tRNA(Gln) in organisms which lack either or both of asparaginyl-tRNA or glutaminyl-tRNA synthetases. The reaction takes place in the presence of glutamine and ATP through an activated phospho-Asp-tRNA(Asn) or phospho-Glu-tRNA(Gln). The chain is Aspartyl/glutamyl-tRNA(Asn/Gln) amidotransferase subunit B from Chlamydia trachomatis serovar A (strain ATCC VR-571B / DSM 19440 / HAR-13).